A 91-amino-acid chain; its full sequence is Large ribosomal subunit protein bL27 (91 aa).

This sequence belongs to the bacterial ribosomal protein bL27 family.

The protein is Large ribosomal subunit protein bL27 of Pseudomonas savastanoi pv. phaseolicola (strain 1448A / Race 6) (Pseudomonas syringae pv. phaseolicola (strain 1448A / Race 6)).